The chain runs to 91 residues: Elongation factor 1-beta (91 aa).

The protein belongs to the EF-1-beta/EF-1-delta family.

In terms of biological role, promotes the exchange of GDP for GTP in EF-1-alpha/GDP, thus allowing the regeneration of EF-1-alpha/GTP that could then be used to form the ternary complex EF-1-alpha/GTP/AAtRNA. The sequence is that of Elongation factor 1-beta from Thermococcus gammatolerans (strain DSM 15229 / JCM 11827 / EJ3).